Consider the following 268-residue polypeptide: NAC transcription factor 29 (268 aa).

An NAC domain is found at 9–161 (LPPGFRFHPT…EWVLCRIYKK (153 aa)). A DNA-binding region spans residues 106 to 167 (VGVKKALVFY…IYKKRGASKL (62 aa)).

As to expression, expressed in senescing leaves, petals and sepals.

The protein localises to the nucleus. Its function is as follows. Transcription activator that binds to, and transactivates the promoter of the abscisic aldehyde oxidase AAO3. Promotes chlorophyll degradation in leaves by enhancing transcription of AAO3, which leads to increased levels of the senescence-inducing hormone abscisic acid (ABA). Involved in the control of dehydration in senescing leaves. Binds to the DNA sequence 5'-CACGTAAGT-3' of SAG113 promoter. SAG113 acts as a negative regulator of ABA signaling for stomatal closure in leaves, and controls water loss during leaf senescence. Transcription factor of the NAC family involved in senescence. May function in the transition between active cell division and cell expansion. Required for normal seed development and morphology. The sequence is that of NAC transcription factor 29 (NAC029) from Arabidopsis thaliana (Mouse-ear cress).